Reading from the N-terminus, the 193-residue chain is Non-canonical purine NTP pyrophosphatase homolog (193 aa).

The protein belongs to the HAM1 NTPase family.

In Halalkalibacterium halodurans (strain ATCC BAA-125 / DSM 18197 / FERM 7344 / JCM 9153 / C-125) (Bacillus halodurans), this protein is Non-canonical purine NTP pyrophosphatase homolog.